We begin with the raw amino-acid sequence, 572 residues long: Serine/threonine-protein kinase pak-1 (572 aa).

Disordered regions lie at residues 1-71 and 156-195; these read MKAF…SRPS and QPYSTSSLPYHGNKIQDPRKMNPMTTSTSSAGYNSKQGVP. One can recognise a CRIB domain in the interval 67–80; that stretch reads ISRPSNFEHTIHVG. The linker stretch occupies residues 81-294; it reads YDPKTGEFTG…IVSIGNPDRK (214 aa). Polar residues predominate over residues 178–195; sequence PMTTSTSSAGYNSKQGVP. Positions 295–546 constitute a Protein kinase domain; it reads YRKVDKIGSG…ASQLLTHPFL (252 aa). ATP-binding positions include 301 to 309 and Lys-324; that span reads IGSGASGSV. Catalysis depends on Asp-414, which acts as the Proton acceptor.

This sequence belongs to the protein kinase superfamily. STE Ser/Thr protein kinase family. STE20 subfamily. Interacts with cdc-42 (GTP-bound form) and cedd-10 (GTP-bound form). Mg(2+) serves as cofactor. It depends on Mn(2+) as a cofactor. In terms of tissue distribution, specifically colocalized with cdc-42 and ced-10 at all hypodermal cell boundaries during embryo elongation throughout the second phase of embryogenesis. Expressed mainly in pharyngeal muscles, the CAN neurons, motor neurons in the ventral nerve cord, several cells in the tail region (including the B and Y cells from L1 to adult, the hypodermal blast cell T in the L1 and some of its progeny in later stages), and the distal tip cells.

It is found in the cell membrane. The protein localises to the cytoplasm. It localises to the cell projection. Its subcellular location is the axon. The protein resides in the perikaryon. The enzyme catalyses L-seryl-[protein] + ATP = O-phospho-L-seryl-[protein] + ADP + H(+). The catalysed reaction is L-threonyl-[protein] + ATP = O-phospho-L-threonyl-[protein] + ADP + H(+). Required for hypodermal cell fusion, together with cdc-42 and ced-10, leading to embryonic body elongation, which involves dramatic cytoskeletal reorganization. Plays a redundant role with max-2 in dorsal axonal guidance in ventral cord commissural motoneurons and in P neuroblast migration. Acts probably downstream of Rho GTPases mig-2 and ced-10 to regulate these 2 processes. Involved in orientating axonal growth of HSN neurons. During gonad morphogenesis and probably in association with pix-1 and git-1, involved in the migration of distal tip cell (DTC) and in maintaining their sharp tapering morphology. In addition, plays a redundant role with max-2 in DTC-mediated guidance of gonad elongation. May phosphorylate mlc-4. In Caenorhabditis elegans, this protein is Serine/threonine-protein kinase pak-1 (pak-1).